A 405-amino-acid polypeptide reads, in one-letter code: L-rhamnonate dehydratase (405 aa).

Substrate contacts are provided by His-33 and Arg-59. Mg(2+) contacts are provided by Asp-226, Glu-252, and Glu-280. The Proton acceptor role is filled by His-329. Glu-349 is a substrate binding site.

It belongs to the mandelate racemase/muconate lactonizing enzyme family. RhamD subfamily. As to quaternary structure, homooctamer; tetramer of dimers. The cofactor is Mg(2+).

The enzyme catalyses L-rhamnonate = 2-dehydro-3-deoxy-L-rhamnonate + H2O. Its function is as follows. Catalyzes the dehydration of L-rhamnonate to 2-keto-3-deoxy-L-rhamnonate (KDR). This Salmonella typhi protein is L-rhamnonate dehydratase.